A 1728-amino-acid polypeptide reads, in one-letter code: U3 small nucleolar RNA-associated protein 10 (1728 aa).

7 HEAT repeats span residues 540–578 (DKDF…LVKE), 881–926 (PANH…MMPA), 986–1024 (FMGS…AYEH), 1191–1229 (LLSI…SEST), 1235–1274 (REAL…KYGK), 1622–1662 (ADAT…GQAA), and 1683–1721 (LQAL…KLGE).

It belongs to the HEATR1/UTP10 family. As to quaternary structure, component of the ribosomal small subunit (SSU) processome.

The protein localises to the nucleus. It localises to the nucleolus. Its function is as follows. Involved in nucleolar processing of pre-18S ribosomal RNA. Involved in ribosome biosynthesis. The protein is U3 small nucleolar RNA-associated protein 10 of Chaetomium globosum (strain ATCC 6205 / CBS 148.51 / DSM 1962 / NBRC 6347 / NRRL 1970) (Soil fungus).